The sequence spans 2189 residues: MTEVGPADRRKLLHSKRAEANSIVTSRKRKLRELYAVATDEDGFPNHDLNDLDTRPASPGEAKFLFDCEILQGRRLAERLLPVFQRPRFDTLQHIATADESSLGHGPHVVQQVQPSPLIHPNHTIPKNVQHNGLPSPAPPASSIRHEPERTVPYNQVPNGAAGPQEALKAFAPRQEFQKLAPVQGSAVKTADGPSGESKPPAKETPVLLAPAAPHGNGRWNGIINNAPQGRVLPTPQTVAPPATAPTSTTKTANLGEGRAGPKDDTVSRGDAEEKARPKPTITSVNQLLSNGDSIRYPDTLSSPSSTVQSAPTPLGNEASASTSPDNEASQSFDKPVSRPEQELRRATTDNKGVGQFTGPSVAVPELRPQPQQPGVYANGAPEVPISSAPSVRPAASGAEAQLLQESAATRTSQVIGKAGVAGPHGAHSTGGLQTQHPSAVNGEVRNMMNGDIPGKHVASQASVSTGVAVTKAALPEVAKQGPLPQGPESRNNRADVGPTPMDLDRIPTAQAPKPIPSVHAVQEKAPSQESARQPQPSSTAPSTTPPSAQPAVSLEKTVPGIQINAPPETETETQARTSQSSHPDTESAVADEEGDMPPGLLTHRLKSLSTRLRERRRKSVPTVVFGKQYRKPRFSDDTALIVNKPKPPGHIPSEDYFVTLFIESFARTSSWMKPLEKLLHSAHKTVSTSDQTLSILDHQACKILRRVYHLQQHDKWSLRQPVRCLEPARPASHQDLLIKEMKWMRTDFREERKWKRAVARNLAYACAEWYYSSPADRKLLQVDAKIPPVRAVDNADTSMADAPETGESLVPELDHSDSPVGNDEEVPELPITTIAPATIFALQDDEVVFELQPSRTADLLLENLPMYGSPLKVPKFDWIIPDYDPDAKWKRPAVPLSKYVEGEMVLDVKPQPQKRSRFQFQGEDEEEEEEYVFGAQPDKGAKLPPTSTDVALFAPEMKLTRDRLHAGHQFRPPSEHPMPVQSFFESRIASQWTLAEDDQLRALVREYSYNWSLISSMISSRSSFPSAVERRTPWECFERWVNLEGLPSDFAKTPYFKAYQARIDAAGRTILQHNQNAAQGQQVGPNGAVAPIPRKRPTNTMRVERRRNQKHLALFDAMRKLAKKREAAAQKQQAQATMTAMRKTNEQQRQQPQQQLHLQAKTPQEYSLMRAARDQQIAEKMAHLAARQHEIIQKRLLTQRQAQLAATPGVAQVPQTAAQLAAANSLNNAAARLNIPGQMAVTAQKLAPGRVPMQAPAGIPTVPAQLAASGLVPPLPVAAIPQAQLQAMQAQHRLPMVNPTPDINLVMQARRIQDQQRAVAVQLQQQQHQQHQHQQHPQQPQQQGQVQQQVVSQQQQQQHQPQQQQQPQQQQQLQQQQPQQQQPQHQQVQTPQPAQQQPQQPQVTQQPPPVPQVQINGVQGSPTPMRPVVNSLNNGVYMSSVSAQAMMASFNAANSVAGMVTSPGAGLSMPMLPAGSPRGPQIPAQQLPYTHIHTRLKEFETHFRNKNPGATQDQIRQMATEHLGRLIVQTQQHAMNAAAGGVGHSLGTVATTTSPHQYAQLLRAQQQAQAQQAQAQQQAPQPAQSQLTPAQLAQAQAAAAQKQKQAAAAAAQAKVLAQAQMQTQTPAHQPHQPQAQPHVQAQAMAAAQLQAQVQLQAQAAAQKQAAQAHPQAQSQGQGQPPQQTQRAHQVQQVQGQQAHQLPQGSQSQQIQQQVQQSPQARQQSQQPQMVRQPVQQAQQPQQLQQPQQSQKTPQMQPQQQVQTPHQQAQKAQQSQQAQLAQQQQHQQQQQQQQHGQAQSQGQIQGQGQAPGQGQAPGQGHAQGQVQGQVQGQVQGQVQGQVQGQVQGQVQGQAPGQVQPQHAQHSRHTPNSQHAQHTQQAQHARNAQQAHHTQQVQQAQHVQQPQGLQGQRHGQVHGNGQQLHQQHQHQQQQPQQAQQTQQQRQQVHPAPQLPQAQPPQHSHQAQAQHPQTQQAQAPQAQAQQPQPPQQAQAQQVQQPQQAKLTQQAQQAQQAQGQQAQGQQAQGQQAQSQQARAQQAQVQQAQVQQAQVQQAQAQQAQAQQAQAQQAQAQAQAQSHGQMQPQTQPQQQPQPQPQSQPQAHQPQQASQQVQHGLVGQQGQQNRQGQQGQQSHQVQQAQQPQVQQAQQPVATPQSASQTSQNSQPAQQAGMAQQQQGQGSGSAAPAPTK.

Disordered stretches follow at residues 183–400 (VQGS…SGAE), 415–438 (VIGKAGVAGPHGAHSTGGLQTQHP), and 477–601 (EVAK…PPGL). Positions 234–253 (PTPQTVAPPATAPTSTTKTA) are enriched in low complexity. Residues 260–277 (AGPKDDTVSRGDAEEKAR) are compositionally biased toward basic and acidic residues. Polar residues-rich tracts occupy residues 281-293 (TITSVNQLLSNGD), 300-312 (TLSSPSSTVQSAP), and 319-333 (ASASTSPDNEASQSF). The segment covering 336-349 (PVSRPEQELRRATT) has biased composition (basic and acidic residues). The span at 534–543 (QPQPSSTAPS) shows a compositional bias: low complexity. Positions 573 to 583 (ETQARTSQSSH) are enriched in polar residues. The region spanning 722-797 (PVRCLEPARP…PPVRAVDNAD (76 aa)) is the HSA domain. The Myb-like domain maps to 985 to 1045 (FESRIASQWT…ECFERWVNLE (61 aa)). Low complexity-rich tracts occupy residues 1320 to 1330 (VAVQLQQQQHQ) and 1336 to 1406 (QHPQ…QVTQ). Disordered stretches follow at residues 1320-1428 (VAVQ…PMRP), 1622-1644 (MQTQTPAHQPHQPQAQPHVQAQA), 1663-1831 (QKQA…GQVQ), and 1846-2189 (VQGQ…APTK). Composition is skewed to low complexity over residues 1663–1808 (QKQA…QGQG), 1818–1831 (GQGHAQGQVQGQVQ), 1846–1863 (VQGQVQGQAPGQVQPQHA), 1873–2089 (QHAQ…QPQQ), and 2097–2189 (SQPQ…APTK).

This sequence belongs to the EAF1 family. As to quaternary structure, component of the NuA4 histone acetyltransferase complex.

It is found in the nucleus. Functionally, component of the NuA4 histone acetyltransferase complex which is involved in transcriptional activation of selected genes principally by acetylation of nucleosomal histone H4 and H2A. The NuA4 complex is also involved in DNA repair. The protein is Chromatin modification-related protein eaf-1 (eaf-1) of Neurospora crassa (strain ATCC 24698 / 74-OR23-1A / CBS 708.71 / DSM 1257 / FGSC 987).